Reading from the N-terminus, the 201-residue chain is Ribonuclease HII (201 aa).

An RNase H type-2 domain is found at 11-201 (LRECGCDEAG…VVDADRPTTE (191 aa)). Residues Asp-17, Glu-18, and Asp-109 each contribute to the a divalent metal cation site.

Belongs to the RNase HII family. Mn(2+) is required as a cofactor. The cofactor is Mg(2+).

It localises to the cytoplasm. The enzyme catalyses Endonucleolytic cleavage to 5'-phosphomonoester.. In terms of biological role, endonuclease that specifically degrades the RNA of RNA-DNA hybrids. This chain is Ribonuclease HII (rnhB), found in Porphyromonas gingivalis (strain ATCC BAA-308 / W83).